A 387-amino-acid polypeptide reads, in one-letter code: MTGKLAEKLPVTMSSLLNQLPDNLYPEEIPSALNLFSGSSDSVAHYNQMATENVMDIGLTNEKPNPELSYSSSFQPAPGNKTVTYLGKFAFDSPSNWCQDNIISLMSAGILGVPPASGALSTQTSTASMVQPPQGDVEAMYPALPPYSNCGDLYSEPVSFHDPQGNPGLAYSPQDYQSAKPALDSNLFPMIPDYNLYHHPNDMGSIPEHKPFQGMDPIRVNPPPITPLETIKAFKDKQIHPGFGSLPQPPLTLKPIRPRKYPNRPSKTPLHERPHACPAEGCDRRFSRSDELTRHLRIHTGHKPFQCRICMRSFSRSDHLTTHIRTHTGEKPFACEFCGRKFARSDERKRHAKIHLKQKEKKSEKGGAPSASSAPTVSLAPVVTTCA.

The interval 241 to 283 (PGFGSLPQPPLTLKPIRPRKYPNRPSKTPLHERPHACPAEGCD) is disordered. A compositionally biased stretch (basic and acidic residues) spans 269–283 (PLHERPHACPAEGCD). 3 consecutive C2H2-type zinc fingers follow at residues 275-299 (HACP…LRIH), 305-327 (FQCR…IRTH), and 333-355 (FACE…AKIH). Residues 348–387 (RKRHAKIHLKQKEKKSEKGGAPSASSAPTVSLAPVVTTCA) are disordered. The span at 350–360 (RHAKIHLKQKE) shows a compositional bias: basic residues.

Belongs to the EGR C2H2-type zinc-finger protein family.

It localises to the nucleus. Its function is as follows. Probable transcription factor involved in muscle spindle development. The polypeptide is Early growth response protein 3 (Egr3) (Mus musculus (Mouse)).